The sequence spans 385 residues: T-box transcription factor TBX10 (385 aa).

A DNA-binding region (T-box) is located at residues 69–252 (LEMKPLWEEF…SNPFAKGFRE (184 aa)). 2 disordered regions span residues 283-310 (GSAE…NQLL) and 328-359 (QNLY…AGDQ). Over residues 293 to 307 (KASASSSRTPTQPHN) the composition is skewed to polar residues. Over residues 331–347 (YPGSPSRAGPPRARLAP) the composition is skewed to low complexity.

The protein localises to the nucleus. Its function is as follows. Probable transcriptional regulator involved in developmental processes. The polypeptide is T-box transcription factor TBX10 (Tbx10) (Mus musculus (Mouse)).